We begin with the raw amino-acid sequence, 560 residues long: Excitatory amino acid transporter 5 (560 aa).

Topologically, residues 1–16 (MVPHAILARGRDVCRR) are cytoplasmic. The next 3 helical transmembrane spans lie at 17–37 (NGLL…GFFL), 60–80 (MLKM…LASL), and 94–114 (AYYL…VSII). Over 115-216 (HPGSAAQKET…EVVYKSEPGT (102 aa)) the chain is Extracellular. A glycan (N-linked (GlcNAc...) asparagine) is linked at Asn-191. 7 helical membrane passes run 217 to 237 (SDGM…IMLG), 260 to 280 (IVAV…AGKI), 300 to 320 (VVCG…FFIT), 330 to 350 (GILQ…TLPI), 372 to 392 (VGAT…AIFI), 414 to 434 (AASI…VIVL), and 457 to 477 (FRTM…AHIC).

It belongs to the dicarboxylate/amino acid:cation symporter (DAACS) (TC 2.A.23) family. SLC1A7 subfamily. In terms of assembly, interacts with the PDZ domains of DLG4. Expressed primarily in retina. Detectable in liver, heart, muscle and brain.

The protein resides in the photoreceptor inner segment membrane. It is found in the synaptic cell membrane. The catalysed reaction is K(+)(in) + L-glutamate(out) + 3 Na(+)(out) + H(+)(out) = K(+)(out) + L-glutamate(in) + 3 Na(+)(in) + H(+)(in). It carries out the reaction K(+)(in) + L-aspartate(out) + 3 Na(+)(out) + H(+)(out) = K(+)(out) + L-aspartate(in) + 3 Na(+)(in) + H(+)(in). The enzyme catalyses D-aspartate(out) + K(+)(in) + 3 Na(+)(out) + H(+)(out) = D-aspartate(in) + K(+)(out) + 3 Na(+)(in) + H(+)(in). Functionally, sodium-dependent, high-affinity amino acid transporter that mediates the uptake of L-glutamate and also L-aspartate and D-aspartate. Functions as a symporter that transports one amino acid molecule together with two or three Na(+) ions and one proton, in parallel with the counter-transport of one K(+) ion. Acts primarily as an inhibitory glutamate-gated chloride channel being a major inhibitory presynaptic receptor at mammalian rod bipolar cell axon terminals. Glutamate binding gates a large Cl(-) conductance that mediates inhibition, affecting visual processing in the retina. This Homo sapiens (Human) protein is Excitatory amino acid transporter 5.